We begin with the raw amino-acid sequence, 212 residues long: Uridine kinase (212 aa).

An ATP-binding site is contributed by 13–20 (GASASGKS).

The protein belongs to the uridine kinase family.

It is found in the cytoplasm. It carries out the reaction uridine + ATP = UMP + ADP + H(+). It catalyses the reaction cytidine + ATP = CMP + ADP + H(+). The protein operates within pyrimidine metabolism; CTP biosynthesis via salvage pathway; CTP from cytidine: step 1/3. It participates in pyrimidine metabolism; UMP biosynthesis via salvage pathway; UMP from uridine: step 1/1. The protein is Uridine kinase of Shewanella baltica (strain OS155 / ATCC BAA-1091).